Consider the following 179-residue polypeptide: MFEGTTIVAVKRGGEVAIGGDGQVTFGQQTVIKRRANKIRKLYRGKVLAGFAGAVADAFTLFDLFEKKLEESQGNLTRAAVELVKTWRTDKFLRRLEAMLLVADRERILLISGTGEVIEPDDGVLAIGSGGNYALAAARALINHTNLSAREIVMESLKIAQEICVYTNDFITVETIGGE.

The active site involves threonine 5. Na(+)-binding residues include cysteine 164 and threonine 167.

This sequence belongs to the peptidase T1B family. HslV subfamily. A double ring-shaped homohexamer of HslV is capped on each side by a ring-shaped HslU homohexamer. The assembly of the HslU/HslV complex is dependent on binding of ATP.

The protein resides in the cytoplasm. The enzyme catalyses ATP-dependent cleavage of peptide bonds with broad specificity.. With respect to regulation, allosterically activated by HslU binding. Functionally, protease subunit of a proteasome-like degradation complex believed to be a general protein degrading machinery. The protein is ATP-dependent protease subunit HslV of Carboxydothermus hydrogenoformans (strain ATCC BAA-161 / DSM 6008 / Z-2901).